The following is a 149-amino-acid chain: Large ribosomal subunit protein uL11 (149 aa).

Belongs to the universal ribosomal protein uL11 family. In terms of assembly, part of the ribosomal stalk of the 50S ribosomal subunit. Interacts with L10 and the large rRNA to form the base of the stalk. L10 forms an elongated spine to which L12 dimers bind in a sequential fashion forming a multimeric L10(L12)X complex. One or more lysine residues are methylated.

In terms of biological role, forms part of the ribosomal stalk which helps the ribosome interact with GTP-bound translation factors. The chain is Large ribosomal subunit protein uL11 from Methylobacterium sp. (strain 4-46).